The chain runs to 200 residues: 3-isopropylmalate dehydratase small subunit (200 aa).

This sequence belongs to the LeuD family. LeuD type 1 subfamily. In terms of assembly, heterodimer of LeuC and LeuD.

The catalysed reaction is (2R,3S)-3-isopropylmalate = (2S)-2-isopropylmalate. It participates in amino-acid biosynthesis; L-leucine biosynthesis; L-leucine from 3-methyl-2-oxobutanoate: step 2/4. Its function is as follows. Catalyzes the isomerization between 2-isopropylmalate and 3-isopropylmalate, via the formation of 2-isopropylmaleate. This Vibrio parahaemolyticus serotype O3:K6 (strain RIMD 2210633) protein is 3-isopropylmalate dehydratase small subunit.